We begin with the raw amino-acid sequence, 629 residues long: FAST kinase domain-containing protein 4 (629 aa).

The 59-residue stretch at I559–D617 folds into the RAP domain.

Belongs to the FAST kinase family.

It localises to the mitochondrion matrix. In terms of biological role, plays a role in processing of mitochondrial RNA precursors and in stabilization of a subset of mature mitochondrial RNA species, such as MT-CO1, MT-CO2, MT-CYB, MT-CO3, MT-ND3, MT-ND5 and MT-ATP8/6. May play a role in cell cycle progression. The sequence is that of FAST kinase domain-containing protein 4 (Tbrg4) from Rattus norvegicus (Rat).